A 433-amino-acid polypeptide reads, in one-letter code: uncharacterized protein (433 aa).

The methylglyoxal synthase stretch occupies residues 1–126 (MAAHIALIAH…VIKLLGKTKT (126 aa)). An MGS-like domain is found at 1–145 (MAAHIALIAH…GQGNVERELD (145 aa)). Aspartate 62 is a catalytic residue. The region spanning 127–262 (GHLIFNPVAG…VDTALCNDIP (136 aa)) is the DAGKc domain.

It in the N-terminal section; belongs to the methylglyoxal synthase family.

This is an uncharacterized protein from Synechocystis sp. (strain ATCC 27184 / PCC 6803 / Kazusa).